The sequence spans 126 residues: MNLIAVLEQEEIKRLTGDKTMPEFAPGDTVVVSVNVVEGTRKRVQAYEGVVIAKRNRGLNSSFIVRKISSGEAVERTFQLYSPQIAGIEVKRRGDVRRAKLYYLRSRSGKSARIKEKLVTKQAKSA.

The protein belongs to the bacterial ribosomal protein bL19 family.

Functionally, this protein is located at the 30S-50S ribosomal subunit interface and may play a role in the structure and function of the aminoacyl-tRNA binding site. The protein is Large ribosomal subunit protein bL19 of Bordetella petrii (strain ATCC BAA-461 / DSM 12804 / CCUG 43448).